A 343-amino-acid polypeptide reads, in one-letter code: Tryptophan--tRNA ligase (343 aa).

ATP-binding positions include 15-17 (QPT) and 24-25 (GN). Residues 16-25 (PTSDSLHLGN) carry the 'HIGH' region motif. D145 is an L-tryptophan binding site. Residues 157 to 159 (GED), I196, and 205 to 209 (KMSKS) contribute to the ATP site. The 'KMSKS' region signature appears at 205–209 (KMSKS).

Belongs to the class-I aminoacyl-tRNA synthetase family. In terms of assembly, homodimer.

It localises to the cytoplasm. The enzyme catalyses tRNA(Trp) + L-tryptophan + ATP = L-tryptophyl-tRNA(Trp) + AMP + diphosphate + H(+). Its function is as follows. Catalyzes the attachment of tryptophan to tRNA(Trp). This Mycobacterium leprae (strain TN) protein is Tryptophan--tRNA ligase.